A 134-amino-acid chain; its full sequence is Glycine cleavage system H protein (134 aa).

In terms of domain architecture, Lipoyl-binding spans 24–106 (TVRVGITDYA…YGAGWLLDIQ (83 aa)). Position 65 is an N6-lipoyllysine (Lys-65).

It belongs to the GcvH family. As to quaternary structure, the glycine cleavage system is composed of four proteins: P, T, L and H. It depends on (R)-lipoate as a cofactor.

Its function is as follows. The glycine cleavage system catalyzes the degradation of glycine. The H protein shuttles the methylamine group of glycine from the P protein to the T protein. The polypeptide is Glycine cleavage system H protein (Mycobacterium tuberculosis (strain ATCC 25177 / H37Ra)).